A 312-amino-acid polypeptide reads, in one-letter code: uncharacterized protein (312 aa).

Disordered stretches follow at residues 1-26 (MQKD…AMVA) and 45-106 (GNLQ…LPSG). Basic residues predominate over residues 8–17 (RFQRNKKKIN). The span at 68–77 (NGKRNGDKVR) shows a compositional bias: basic and acidic residues. A compositionally biased stretch (polar residues) spans 85–103 (GHSSYAGSRISGGNSNSHL).

This is an uncharacterized protein from Schizosaccharomyces pombe (strain 972 / ATCC 24843) (Fission yeast).